The sequence spans 523 residues: Uridylate cyclase (523 aa).

Guanylate cyclase domains lie at 69–209 (VHVY…AKLA) and 318–438 (MSIF…IGIR). Tyr72 and Arg125 together coordinate a ribonucleoside 5'-triphosphate. Mn(2+) is bound by residues Asp323, Ile324, and Asp372.

This sequence belongs to the adenylyl cyclase class-4/guanylyl cyclase family. Pyrimidine cyclase subfamily. As to quaternary structure, monomer. Mn(2+) serves as cofactor.

It is found in the cytoplasm. It catalyses the reaction UTP = 3',5'-cyclic UMP + diphosphate. Functionally, pycsar (pyrimidine cyclase system for antiphage resistance) provides immunity against bacteriophage. The pyrimidine cyclase (PycC) synthesizes cyclic nucleotides in response to infection; these serve as specific second messenger signals. The signals activate the nearby effector, leading to bacterial cell death and abortive phage infection. A clade A Pycsar system. Its function is as follows. The pyrimidine cyclase gene of a two-gene Pycsar system, generates cyclic UMP (cUMP) from UTP, has little to no activity on ATP, CTP or GTP. Expression of this and effector RsPycTM (AC A0A4R2UGS4) probably confers resistance to some bacteriophage. The genes are probably only expressed in response to bacteriophage infection. The polypeptide is Uridylate cyclase (Rhizobium sp. (strain PP-F2F-G36)).